A 787-amino-acid chain; its full sequence is Endonuclease MutS2 (787 aa).

Glycine 331 to threonine 338 contacts ATP. The Smr domain maps to isoleucine 711–lysine 786.

The protein belongs to the DNA mismatch repair MutS family. MutS2 subfamily. In terms of assembly, homodimer. Binds to stalled ribosomes, contacting rRNA.

Its function is as follows. Endonuclease that is involved in the suppression of homologous recombination and thus may have a key role in the control of bacterial genetic diversity. Functionally, acts as a ribosome collision sensor, splitting the ribosome into its 2 subunits. Detects stalled/collided 70S ribosomes which it binds and splits by an ATP-hydrolysis driven conformational change. Acts upstream of the ribosome quality control system (RQC), a ribosome-associated complex that mediates the extraction of incompletely synthesized nascent chains from stalled ribosomes and their subsequent degradation. Probably generates substrates for RQC. This chain is Endonuclease MutS2, found in Caldicellulosiruptor bescii (strain ATCC BAA-1888 / DSM 6725 / KCTC 15123 / Z-1320) (Anaerocellum thermophilum).